The chain runs to 273 residues: 2,3,4,5-tetrahydropyridine-2,6-dicarboxylate N-succinyltransferase (273 aa).

Positions 104 and 141 each coordinate substrate.

This sequence belongs to the transferase hexapeptide repeat family. Homotrimer.

It localises to the cytoplasm. It catalyses the reaction (S)-2,3,4,5-tetrahydrodipicolinate + succinyl-CoA + H2O = (S)-2-succinylamino-6-oxoheptanedioate + CoA. It functions in the pathway amino-acid biosynthesis; L-lysine biosynthesis via DAP pathway; LL-2,6-diaminopimelate from (S)-tetrahydrodipicolinate (succinylase route): step 1/3. This Blochmanniella pennsylvanica (strain BPEN) protein is 2,3,4,5-tetrahydropyridine-2,6-dicarboxylate N-succinyltransferase.